Reading from the N-terminus, the 1027-residue chain is LLGL scribble cell polarity complex component 2 (1027 aa).

10 WD repeats span residues 36–69 (SALGYSPSLRILAIGTRSGAVKLYGAPGVEFMGL), 76–117 (VLQI…EESF), 132–169 (VTEILPHSSGELLYLGTESGNVFVVQLPGFRTLHDRTI), 193–227 (ALQEHPRDPNQILIGYSRGLVVIWDLQGSRALSHF), 233–268 (LENASWQRDGCLIVTCHSDGSHCQWPVSSDTQNPEP), 282–324 (AITK…GQQT), 332–366 (VIDFTVLSEADPAAAFDDPYALVVLAEEELVVIDL), 388–464 (TCSH…YKLS), 508–583 (QKIF…FVLV), and 592–653 (TSLA…LRQS). Serine 653 is modified (phosphoserine). Residues 654 to 669 (FRRMRRSRVSSHKRRP) are compositionally biased toward basic residues. The disordered stretch occupies residues 654–678 (FRRMRRSRVSSHKRRPGGPTGEAQA). WD repeat units follow at residues 715 to 771 (VRTL…KEIQ), 780 to 832 (GILV…VSAK), 837 to 890 (LTAL…VRYS), and 904 to 927 (VFTKYGQGFYLISPSEFERFSLST). Residues 940-981 (TKAKKHNRPSNGNGTGLKMTSSGHVRNSKSQSDGDEKKPGPV) are disordered. Positions 957–970 (KMTSSGHVRNSKSQ) are enriched in polar residues. 2 positions are modified to phosphoserine: serine 971 and serine 1022.

The protein belongs to the WD repeat L(2)GL family. Interacts with GPSM2/LGN, PRKCI/aPKC and PARD6B/Par-6. The complex is enhanced during mitosis. Interacts with DCAF1. Phosphorylated at Ser-653 by PRKCI. Phosphorylation is enhanced during cell polarization induced by calcium. Phosphorylation may occur during the cell-cell contact-induced cell polarization and may contribute to the segregation of LLGL2 from the PRKCI/aPKC and PARD6B/Par-6 complex.

The protein resides in the cytoplasm. Functionally, part of a complex with GPSM2/LGN, PRKCI/aPKC and PARD6B/Par-6, which may ensure the correct organization and orientation of bipolar spindles for normal cell division. This complex plays roles in the initial phase of the establishment of epithelial cell polarity. This is LLGL scribble cell polarity complex component 2 (Llgl2) from Mus musculus (Mouse).